The primary structure comprises 436 residues: MVVNKGIRLLSTKAARFVPSGGVYPKGFVVGGIHCGVKKDGKSPDLAVLHNTFGQDANAAAVFTKNKFKAAPVQVSAATIKQKNGVGINSIIVNSGNANAVTGQKGMEDARAMAMVTDSVFGDHKDSTLVMSTGVIGNKLPIDNILSGIPKLESQVGDSHDHWLACANAICTTDTFPKLVSKSFEINGNTYTMAGVAKGAGMICPNMATLLGFFVTDAPVSAKALQQILSYATDRSFNSISVDGDMSTNDTIVAIANGAAGGDLIDNNSSCAESYFELQKEVTSFAQKLAQLVVRDGEGATKFITLKVKDALSYKDAKSIASSIANSSLFKTAMFGKDANWGRILCAIGYSDVSTAQSIIPDRTSVTFVPTDGSEPLPLLVDGEPESVDEARAAQILELEDLEIEIDLGTGGGQEAKFWTCDLSHEYVTINGDYRS.

Positions 172, 198, 209, 298, 431, and 436 each coordinate substrate. Thr209 (nucleophile) is an active-site residue.

It belongs to the ArgJ family. In terms of assembly, heterodimer of an alpha and a beta chain. In terms of processing, the alpha and beta chains are autoproteolytically processed from a single precursor protein within the mitochondrion.

The protein resides in the mitochondrion matrix. It carries out the reaction N(2)-acetyl-L-ornithine + L-glutamate = N-acetyl-L-glutamate + L-ornithine. It catalyses the reaction L-glutamate + acetyl-CoA = N-acetyl-L-glutamate + CoA + H(+). The protein operates within amino-acid biosynthesis; L-arginine biosynthesis; L-ornithine and N-acetyl-L-glutamate from L-glutamate and N(2)-acetyl-L-ornithine (cyclic): step 1/1. It participates in amino-acid biosynthesis; L-arginine biosynthesis; N(2)-acetyl-L-ornithine from L-glutamate: step 1/4. Catalyzes two activities which are involved in the cyclic version of arginine biosynthesis: the synthesis of acetylglutamate from glutamate and acetyl-CoA, and of ornithine by transacetylation between acetylornithine and glutamate. The sequence is that of Arginine biosynthesis bifunctional protein ArgJ, mitochondrial from Meyerozyma guilliermondii (strain ATCC 6260 / CBS 566 / DSM 6381 / JCM 1539 / NBRC 10279 / NRRL Y-324) (Yeast).